The primary structure comprises 24 residues: Erythromycin resistance leader peptide (24 aa).

The segment covering 1 to 14 has biased composition (low complexity); the sequence is MSMGIAARPPRAAL. Residues 1–24 form a disordered region; sequence MSMGIAARPPRAALLPPPSVPRSR. The segment covering 15–24 has biased composition (pro residues); that stretch reads LPPPSVPRSR.

In terms of biological role, this peptide is involved in the control mechanism of the synthesis of the macrolide-lincosamide-streptogramin B resistance protein. This is Erythromycin resistance leader peptide from Streptomyces fradiae (Streptomyces roseoflavus).